Consider the following 279-residue polypeptide: Putative pyruvate, phosphate dikinase regulatory protein (279 aa).

156–163 (GVSRTSKT) is an ADP binding site.

This sequence belongs to the pyruvate, phosphate/water dikinase regulatory protein family. PDRP subfamily.

The enzyme catalyses N(tele)-phospho-L-histidyl/L-threonyl-[pyruvate, phosphate dikinase] + ADP = N(tele)-phospho-L-histidyl/O-phospho-L-threonyl-[pyruvate, phosphate dikinase] + AMP + H(+). It carries out the reaction N(tele)-phospho-L-histidyl/O-phospho-L-threonyl-[pyruvate, phosphate dikinase] + phosphate + H(+) = N(tele)-phospho-L-histidyl/L-threonyl-[pyruvate, phosphate dikinase] + diphosphate. Functionally, bifunctional serine/threonine kinase and phosphorylase involved in the regulation of the pyruvate, phosphate dikinase (PPDK) by catalyzing its phosphorylation/dephosphorylation. In Maricaulis maris (strain MCS10) (Caulobacter maris), this protein is Putative pyruvate, phosphate dikinase regulatory protein.